A 1040-amino-acid chain; its full sequence is Multidrug resistance protein MdtB (1040 aa).

The next 11 helical transmembrane spans lie at 15 to 37 (LFILRPVATTLLMIAILLAGIIG), 343 to 365 (VQFELLLAIALVVMVIYLFLRNA), 369 to 391 (LIPSIAVPLSLVGTFAAMYFLGF), 398 to 420 (LMALTIATGFVVDDAIVVIENIA), 440 to 462 (IGFTIISLTFSLIAVLIPLLFMG), 474 to 496 (VTLAVSILISAVVSLTLTPMMCA), 535 to 557 (HPWLTLSVALGTLLLTILLYIWI), 867 to 889 (VWLIVAAIVAMYIVLGVLYESFI), 909 to 931 (LMMAGKDLDVIAIIGIILLIGIV), 968 to 990 (ILMTTMAALLSALPLMLSTGVGA), and 1000 to 1022 (MVGGLIMSQILTLFTTPVIYLLF).

It belongs to the resistance-nodulation-cell division (RND) (TC 2.A.6) family. MdtB subfamily. In terms of assembly, part of a tripartite efflux system composed of MdtA, MdtB and MdtC. MdtB forms a heteromultimer with MdtC.

The protein resides in the cell inner membrane. This is Multidrug resistance protein MdtB from Pectobacterium atrosepticum (strain SCRI 1043 / ATCC BAA-672) (Erwinia carotovora subsp. atroseptica).